We begin with the raw amino-acid sequence, 459 residues long: Bifunctional protein GlmU (459 aa).

A pyrophosphorylase region spans residues 1-230 (MVKRYAVILA…FEETIGVNDR (230 aa)). UDP-N-acetyl-alpha-D-glucosamine contacts are provided by residues 9-12 (LAAG), lysine 23, glutamine 73, and 78-79 (GT). Aspartate 103 serves as a coordination point for Mg(2+). UDP-N-acetyl-alpha-D-glucosamine-binding residues include glycine 140, glutamate 155, asparagine 170, and asparagine 228. Asparagine 228 provides a ligand contact to Mg(2+). The tract at residues 231–251 (VALAEAEKIMRERICRKHMMN) is linker. Residues 252 to 459 (GVTIIDPAHT…VDRLSIKKNS (208 aa)) form an N-acetyltransferase region. The UDP-N-acetyl-alpha-D-glucosamine site is built by arginine 333 and lysine 351. Catalysis depends on histidine 363, which acts as the Proton acceptor. 2 residues coordinate UDP-N-acetyl-alpha-D-glucosamine: tyrosine 366 and asparagine 377. Acetyl-CoA is bound by residues 386–387 (NY), alanine 423, and arginine 440.

This sequence in the N-terminal section; belongs to the N-acetylglucosamine-1-phosphate uridyltransferase family. It in the C-terminal section; belongs to the transferase hexapeptide repeat family. As to quaternary structure, homotrimer. Mg(2+) serves as cofactor.

It localises to the cytoplasm. It carries out the reaction alpha-D-glucosamine 1-phosphate + acetyl-CoA = N-acetyl-alpha-D-glucosamine 1-phosphate + CoA + H(+). It catalyses the reaction N-acetyl-alpha-D-glucosamine 1-phosphate + UTP + H(+) = UDP-N-acetyl-alpha-D-glucosamine + diphosphate. Its pathway is nucleotide-sugar biosynthesis; UDP-N-acetyl-alpha-D-glucosamine biosynthesis; N-acetyl-alpha-D-glucosamine 1-phosphate from alpha-D-glucosamine 6-phosphate (route II): step 2/2. The protein operates within nucleotide-sugar biosynthesis; UDP-N-acetyl-alpha-D-glucosamine biosynthesis; UDP-N-acetyl-alpha-D-glucosamine from N-acetyl-alpha-D-glucosamine 1-phosphate: step 1/1. It participates in bacterial outer membrane biogenesis; LPS lipid A biosynthesis. Its function is as follows. Catalyzes the last two sequential reactions in the de novo biosynthetic pathway for UDP-N-acetylglucosamine (UDP-GlcNAc). The C-terminal domain catalyzes the transfer of acetyl group from acetyl coenzyme A to glucosamine-1-phosphate (GlcN-1-P) to produce N-acetylglucosamine-1-phosphate (GlcNAc-1-P), which is converted into UDP-GlcNAc by the transfer of uridine 5-monophosphate (from uridine 5-triphosphate), a reaction catalyzed by the N-terminal domain. The protein is Bifunctional protein GlmU of Geobacillus sp. (strain WCH70).